The chain runs to 57 residues: UPF0391 membrane protein BRADO5617 (57 aa).

The next 2 helical transmembrane spans lie at 1–21 and 30–50; these read MLGW…LGFG and IAKI…VVGL.

The protein belongs to the UPF0391 family.

It is found in the cell membrane. The polypeptide is UPF0391 membrane protein BRADO5617 (Bradyrhizobium sp. (strain ORS 278)).